The following is a 253-amino-acid chain: Triosephosphate isomerase (253 aa).

Position 9–11 (9–11 (NWK)) interacts with substrate. His-95 functions as the Electrophile in the catalytic mechanism. Glu-167 functions as the Proton acceptor in the catalytic mechanism. Substrate contacts are provided by residues Gly-173, Ser-213, and 234-235 (GG). Residue Ser-213 is modified to Phosphoserine.

The protein belongs to the triosephosphate isomerase family. Homodimer.

The protein resides in the cytoplasm. It carries out the reaction D-glyceraldehyde 3-phosphate = dihydroxyacetone phosphate. It functions in the pathway carbohydrate biosynthesis; gluconeogenesis. Its pathway is carbohydrate degradation; glycolysis; D-glyceraldehyde 3-phosphate from glycerone phosphate: step 1/1. Involved in the gluconeogenesis. Catalyzes stereospecifically the conversion of dihydroxyacetone phosphate (DHAP) to D-glyceraldehyde-3-phosphate (G3P). In Geobacillus thermodenitrificans (strain NG80-2), this protein is Triosephosphate isomerase.